Here is a 59-residue protein sequence, read N- to C-terminus: Large ribosomal subunit protein bL32 (59 aa).

Positions 1-59 (MAVQQNKKSPSKRGMHRSHDALTAPALSVDSTTGEVHRPHHISPNGMYRGRKVVKAKGE) are disordered. Residues 49-59 (RGRKVVKAKGE) are compositionally biased toward basic residues.

This sequence belongs to the bacterial ribosomal protein bL32 family.

The chain is Large ribosomal subunit protein bL32 (rpmF) from Neisseria meningitidis serogroup B (strain ATCC BAA-335 / MC58).